Here is a 483-residue protein sequence, read N- to C-terminus: Glutamate--tRNA ligase (483 aa).

The 'HIGH' region motif lies at 11–21 (PSPTGLLHIGN). A 'KMSKS' region motif is present at residues 255–259 (KLSKR). K258 is an ATP binding site.

It belongs to the class-I aminoacyl-tRNA synthetase family. Glutamate--tRNA ligase type 1 subfamily. Monomer.

It is found in the cytoplasm. It catalyses the reaction tRNA(Glu) + L-glutamate + ATP = L-glutamyl-tRNA(Glu) + AMP + diphosphate. Its function is as follows. Catalyzes the attachment of glutamate to tRNA(Glu) in a two-step reaction: glutamate is first activated by ATP to form Glu-AMP and then transferred to the acceptor end of tRNA(Glu). The protein is Glutamate--tRNA ligase of Lactococcus lactis subsp. cremoris (strain SK11).